The following is a 603-amino-acid chain: Phosphogluconate dehydratase (603 aa).

[4Fe-4S] cluster-binding residues include cysteine 154 and cysteine 221.

The protein belongs to the IlvD/Edd family. The cofactor is [4Fe-4S] cluster.

It carries out the reaction 6-phospho-D-gluconate = 2-dehydro-3-deoxy-6-phospho-D-gluconate + H2O. The protein operates within carbohydrate metabolism; Entner-Doudoroff pathway. In terms of biological role, catalyzes the dehydration of 6-phospho-D-gluconate to 2-dehydro-3-deoxy-6-phospho-D-gluconate. The sequence is that of Phosphogluconate dehydratase from Escherichia coli O157:H7.